Consider the following 215-residue polypeptide: uncharacterized protein (215 aa).

The protein belongs to the HAD-like hydrolase superfamily. CbbY/CbbZ/Gph/YieH family.

This is an uncharacterized protein from Lacticaseibacillus casei (Lactobacillus casei).